Reading from the N-terminus, the 127-residue chain is Glycine cleavage system H protein (127 aa).

Residues 24–105 (TVKVGISDHA…PYEAWLFAVR (82 aa)) form the Lipoyl-binding domain. N6-lipoyllysine is present on Lys-65.

It belongs to the GcvH family. In terms of assembly, the glycine cleavage system is composed of four proteins: P, T, L and H. It depends on (R)-lipoate as a cofactor.

In terms of biological role, the glycine cleavage system catalyzes the degradation of glycine. The H protein shuttles the methylamine group of glycine from the P protein to the T protein. The chain is Glycine cleavage system H protein from Methylococcus capsulatus (strain ATCC 33009 / NCIMB 11132 / Bath).